A 274-amino-acid chain; its full sequence is Thymidylate synthase (274 aa).

Arg-21 contributes to the dUMP binding site. His-51 is a (6R)-5,10-methylene-5,6,7,8-tetrahydrofolate binding site. DUMP is bound at residue 123-124; it reads RR. The Nucleophile role is filled by Cys-156. DUMP contacts are provided by residues 176-179, Asn-187, and 217-219; these read RSAD and HIY. Residue Asp-179 coordinates (6R)-5,10-methylene-5,6,7,8-tetrahydrofolate. Ala-273 provides a ligand contact to (6R)-5,10-methylene-5,6,7,8-tetrahydrofolate.

It belongs to the thymidylate synthase family. Bacterial-type ThyA subfamily. In terms of assembly, homodimer.

It is found in the cytoplasm. It carries out the reaction dUMP + (6R)-5,10-methylene-5,6,7,8-tetrahydrofolate = 7,8-dihydrofolate + dTMP. Its pathway is pyrimidine metabolism; dTTP biosynthesis. In terms of biological role, catalyzes the reductive methylation of 2'-deoxyuridine-5'-monophosphate (dUMP) to 2'-deoxythymidine-5'-monophosphate (dTMP) while utilizing 5,10-methylenetetrahydrofolate (mTHF) as the methyl donor and reductant in the reaction, yielding dihydrofolate (DHF) as a by-product. This enzymatic reaction provides an intracellular de novo source of dTMP, an essential precursor for DNA biosynthesis. This chain is Thymidylate synthase, found in Christiangramia forsetii (strain DSM 17595 / CGMCC 1.15422 / KT0803) (Gramella forsetii).